The sequence spans 424 residues: N-succinylarginine dihydrolase (424 aa).

Substrate-binding positions include 19–28 (AGLSPGNIAS), asparagine 110, and 137–138 (HR). Glutamate 174 is an active-site residue. Substrate is bound at residue arginine 207. Residue histidine 240 is part of the active site. Residues aspartate 242 and asparagine 349 each coordinate substrate. Residue cysteine 355 is the Nucleophile of the active site.

It belongs to the succinylarginine dihydrolase family. In terms of assembly, homodimer.

The catalysed reaction is N(2)-succinyl-L-arginine + 2 H2O + 2 H(+) = N(2)-succinyl-L-ornithine + 2 NH4(+) + CO2. The protein operates within amino-acid degradation; L-arginine degradation via AST pathway; L-glutamate and succinate from L-arginine: step 2/5. Its function is as follows. Catalyzes the hydrolysis of N(2)-succinylarginine into N(2)-succinylornithine, ammonia and CO(2). The chain is N-succinylarginine dihydrolase from Rhizorhabdus wittichii (strain DSM 6014 / CCUG 31198 / JCM 15750 / NBRC 105917 / EY 4224 / RW1) (Sphingomonas wittichii).